The sequence spans 107 residues: Protein Rev (107 aa).

S5 and S8 each carry phosphoserine; by host CK2. A homomultimerization region spans residues 18-26; that stretch reads IIKILYQSN. Disordered regions lie at residues 26 to 50 and 82 to 107; these read NPYPKPEGTRQARRNRRRRWRARQR and NINCSESGGTSGTQQPQGNTERVGNP. A Nuclear localization signal and RNA-binding (RRE) motif is present at residues 34–50; the sequence is TRQARRNRRRRWRARQR. The span at 36 to 50 shows a compositional bias: basic residues; the sequence is QARRNRRRRWRARQR. The Nuclear export signal and binding to XPO1 motif lies at 73-84; that stretch reads FQLPPIERLNIN. The segment covering 86–101 has biased composition (low complexity); it reads SESGGTSGTQQPQGNT. A Phosphoserine; by host modification is found at S92.

The protein belongs to the HIV-1 REV protein family. Homomultimer; when bound to the RRE. Multimeric assembly is essential for activity and may involve XPO1. Binds to human KPNB1, XPO1, TNPO1, RANBP5 and IPO7. Interacts with the viral Integrase. Interacts with human KHDRBS1. Interacts with human NAP1; this interaction decreases Rev multimerization and stimulates its activity. Interacts with human DEAD-box helicases DDX3 and DDX24; these interactions may serve for viral RNA export to the cytoplasm and packaging, respectively. Interacts with human PSIP1; this interaction may inhibit HIV-1 DNA integration by promoting dissociation of the Integrase-LEDGF/p75 complex. Asymmetrically arginine dimethylated at one site by host PRMT6. Methylation impairs the RNA-binding activity and export of viral RNA from the nucleus to the cytoplasm. In terms of processing, phosphorylated by protein kinase CK2. Presence of, and maybe binding to the N-terminus of the regulatory beta subunit of CK2 is necessary for CK2-mediated Rev's phosphorylation.

It is found in the host nucleus. Its subcellular location is the host nucleolus. It localises to the host cytoplasm. Escorts unspliced or incompletely spliced viral pre-mRNAs (late transcripts) out of the nucleus of infected cells. These pre-mRNAs carry a recognition sequence called Rev responsive element (RRE) located in the env gene, that is not present in fully spliced viral mRNAs (early transcripts). This function is essential since most viral proteins are translated from unspliced or partially spliced pre-mRNAs which cannot exit the nucleus by the pathway used by fully processed cellular mRNAs. Rev itself is translated from a fully spliced mRNA that readily exits the nucleus. Rev's nuclear localization signal (NLS) binds directly to KPNB1/Importin beta-1 without previous binding to KPNA1/Importin alpha-1. KPNB1 binds to the GDP bound form of RAN (Ran-GDP) and targets Rev to the nucleus. In the nucleus, the conversion from Ran-GDP to Ran-GTP dissociates Rev from KPNB1 and allows Rev's binding to the RRE in viral pre-mRNAs. Rev multimerization on the RRE via cooperative assembly exposes its nuclear export signal (NES) to the surface. Rev can then form a complex with XPO1/CRM1 and Ran-GTP, leading to nuclear export of the complex. Conversion from Ran-GTP to Ran-GDP mediates dissociation of the Rev/RRE/XPO1/RAN complex, so that Rev can return to the nucleus for a subsequent round of export. Beside KPNB1, also seems to interact with TNPO1/Transportin-1, RANBP5/IPO5 and IPO7/RANBP7 for nuclear import. The nucleoporin-like HRB/RIP is an essential cofactor that probably indirectly interacts with Rev to release HIV RNAs from the perinuclear region to the cytoplasm. This chain is Protein Rev, found in Human immunodeficiency virus type 1 group M subtype C (isolate 92BR025) (HIV-1).